A 577-amino-acid chain; its full sequence is Sensory neuron membrane protein 2 (577 aa).

The Cytoplasmic segment spans residues 1-6; sequence MVQCTL. The helical transmembrane segment at 7–27 threads the bilayer; the sequence is IWAGIGAMMAVSGALLGWVVF. Over 28–519 the chain is Extracellular; that stretch reads PRAVHEKVIE…LMKVLSLLDV (492 aa). Residues Asn66, Asn161, Asn271, and Asn307 are each glycosylated (N-linked (GlcNAc...) asparagine). 3 disulfides stabilise this stretch: Cys316-Cys384, Cys345-Cys411, and Cys386-Cys400. The helical transmembrane segment at 520 to 540 threads the bilayer; it reads VQWVLIGVGLLLAVLMPTVYF. At 541 to 577 the chain is on the cytoplasmic side; sequence VKRCRGEGSRTVSPAVTATTSAASLSTVAGVTGDRSK.

It belongs to the CD36 family.

Its subcellular location is the cell membrane. In terms of biological role, plays an olfactory role that is not restricted to pheromone sensitivity. This chain is Sensory neuron membrane protein 2, found in Anopheles gambiae (African malaria mosquito).